We begin with the raw amino-acid sequence, 154 residues long: Interleukin-2 (154 aa).

A signal peptide spans 1–20 (MYRMQLLSCIALSLALITNS). O-linked (GalNAc...) threonine glycosylation occurs at Thr23. An intrachain disulfide couples Cys78 to Cys126.

This sequence belongs to the IL-2 family.

The protein localises to the secreted. Functionally, cytokine produced by activated CD4-positive helper T-cells and to a lesser extend activated CD8-positive T-cells and natural killer (NK) cells that plays pivotal roles in the immune response and tolerance. Binds to a receptor complex composed of either the high-affinity trimeric IL-2R (IL2RA/CD25, IL2RB/CD122 and IL2RG/CD132) or the low-affinity dimeric IL-2R (IL2RB and IL2RG). Interaction with the receptor leads to oligomerization and conformation changes in the IL-2R subunits resulting in downstream signaling starting with phosphorylation of JAK1 and JAK3. In turn, JAK1 and JAK3 phosphorylate the receptor to form a docking site leading to the phosphorylation of several substrates including STAT5. This process leads to activation of several pathways including STAT, phosphoinositide-3-kinase/PI3K and mitogen-activated protein kinase/MAPK pathways. Functions as a T-cell growth factor and can increase NK-cell cytolytic activity as well. Promotes strong proliferation of activated B-cells and subsequently immunoglobulin production. Plays a pivotal role in regulating the adaptive immune system by controlling the survival and proliferation of regulatory T-cells, which are required for the maintenance of immune tolerance. Moreover, participates in the differentiation and homeostasis of effector T-cell subsets, including Th1, Th2, Th17 as well as memory CD8-positive T-cells. The sequence is that of Interleukin-2 (IL2) from Papio hamadryas (Hamadryas baboon).